A 207-amino-acid chain; its full sequence is Serotype 2 fimbrial subunit (207 aa).

The signal sequence occupies residues 1-26; it reads MQIPFQRALRLCLRAALAAIASAAHA. Cys42 and Cys85 form a disulfide bridge.

It belongs to the fimbrial protein family.

It localises to the fimbrium. Its function is as follows. Bordetella pertussis is the causative agent of whooping cough. An essential step in the disease process is the attachment of the bacteria to the ciliated epithelium of the respiratory tract, enabling the organism to resist normal host-clearance mechanisms. It is unclear which bacterial cell surface component are responsible for adherence but the fimbriae of B.pertussis are prime candidates for being involved in this process. The chain is Serotype 2 fimbrial subunit (fim2) from Bordetella pertussis (strain Tohama I / ATCC BAA-589 / NCTC 13251).